A 170-amino-acid chain; its full sequence is Lipoprotein signal peptidase (170 aa).

2 helical membrane-spanning segments follow: residues 71 to 91 and 97 to 116; these read YFFI…ILEN and AIAY…DRVF. Residues Asp-122 and Asp-140 contribute to the active site. The chain crosses the membrane as a helical span at residues 131-151; the sequence is WHWPAFNLADIAIVLGALLFV.

This sequence belongs to the peptidase A8 family.

It is found in the cell inner membrane. The enzyme catalyses Release of signal peptides from bacterial membrane prolipoproteins. Hydrolyzes -Xaa-Yaa-Zaa-|-(S,diacylglyceryl)Cys-, in which Xaa is hydrophobic (preferably Leu), and Yaa (Ala or Ser) and Zaa (Gly or Ala) have small, neutral side chains.. The protein operates within protein modification; lipoprotein biosynthesis (signal peptide cleavage). Its function is as follows. This protein specifically catalyzes the removal of signal peptides from prolipoproteins. This chain is Lipoprotein signal peptidase, found in Serratia marcescens.